Consider the following 205-residue polypeptide: Protease (205 aa).

Active-site residues include histidine 54, aspartate 71, and cysteine 122.

The protein belongs to the peptidase C5 family. As to quaternary structure, interacts with protease cofactor pVI-C; this interaction is necessary for protease activation.

The protein resides in the virion. The protein localises to the host nucleus. The catalysed reaction is Cleaves proteins of the adenovirus and its host cell at two consensus sites: -Yaa-Xaa-Gly-Gly-|-Xaa- and -Yaa-Xaa-Gly-Xaa-|-Gly- (in which Yaa is Met, Ile or Leu, and Xaa is any amino acid).. Requires DNA and protease cofactor for maximal activation. Inside nascent virions, becomes partially activated by binding to the viral DNA, allowing it to cleave the cofactor that binds to the protease and fully activates it. Actin, like the viral protease cofactor, seems to act as a cofactor in the cleavage of cytokeratin 18 and of actin itself. Its function is as follows. Cleaves viral precursor proteins (pTP, pIIIa, pVI, pVII, pVIII, and pX) inside newly assembled particles giving rise to mature virions. Protease complexed to its cofactor slides along the viral DNA to specifically locate and cleave the viral precursors. Mature virions have a weakened organization compared to the unmature virions, thereby facilitating subsequent uncoating. Without maturation, the particle lacks infectivity and is unable to uncoat. Late in adenovirus infection, in the cytoplasm, may participate in the cytoskeleton destruction. Cleaves host cell cytoskeletal keratins K7 and K18. The chain is Protease from Homo sapiens (Human).